The following is a 328-amino-acid chain: Ribosomal protein L11 methyltransferase (328 aa).

Positions 153, 174, 196, and 263 each coordinate S-adenosyl-L-methionine.

Belongs to the methyltransferase superfamily. PrmA family.

Its subcellular location is the cytoplasm. It carries out the reaction L-lysyl-[protein] + 3 S-adenosyl-L-methionine = N(6),N(6),N(6)-trimethyl-L-lysyl-[protein] + 3 S-adenosyl-L-homocysteine + 3 H(+). Functionally, methylates ribosomal protein L11. The chain is Ribosomal protein L11 methyltransferase from Chloroflexus aurantiacus (strain ATCC 29366 / DSM 635 / J-10-fl).